The sequence spans 116 residues: Vitelline membrane protein Vm32E (116 aa).

A signal peptide spans 1 to 17 (MKIVAFTLVAFVALAGA). Residues 36–73 (GYPAPPCPTNYLFSCQPNLAPAPCAQEAPAYGSAGAYT) enclose the VM domain.

The protein belongs to the vitelline membrane family.

Its subcellular location is the secreted. In terms of biological role, major early eggshell protein. The sequence is that of Vitelline membrane protein Vm32E from Drosophila santomea (Fruit fly).